A 728-amino-acid polypeptide reads, in one-letter code: Catalase-peroxidase (728 aa).

A disordered region spans residues 1–26 (MDNPTDTAGKCPVAHGNKPRGPSNRD). The segment at residues 96–218 (WHSAGTYRIT…LGAVQMGLIY (123 aa)) is a cross-link (tryptophyl-tyrosyl-methioninium (Trp-Tyr) (with M-244)). Catalysis depends on His-97, which acts as the Proton acceptor. A cross-link (tryptophyl-tyrosyl-methioninium (Tyr-Met) (with W-96)) is located at residues 218 to 244 (YVNPEGPGGNPDPLASARDIRETFARM). His-259 is a heme b binding site.

The protein belongs to the peroxidase family. Peroxidase/catalase subfamily. Homodimer or homotetramer. Heme b serves as cofactor. Formation of the three residue Trp-Tyr-Met cross-link is important for the catalase, but not the peroxidase activity of the enzyme.

It carries out the reaction H2O2 + AH2 = A + 2 H2O. It catalyses the reaction 2 H2O2 = O2 + 2 H2O. Functionally, bifunctional enzyme with both catalase and broad-spectrum peroxidase activity. This chain is Catalase-peroxidase, found in Rhizobium etli (strain CIAT 652).